Here is a 158-residue protein sequence, read N- to C-terminus: Glycine/sarcosine/betaine reductase complex component A1 (158 aa).

Sec44 is an active-site residue. Position 44 (Sec44) is a non-standard amino acid, selenocysteine.

This sequence belongs to the GrdA family. Monomer. Component of the glycine, sarcosine and betaine reductase complexes, together with components B and C.

The enzyme catalyses acetyl phosphate + [thioredoxin]-disulfide + NH4(+) + H2O = [thioredoxin]-dithiol + glycine + phosphate + H(+). It catalyses the reaction acetyl phosphate + methylamine + [thioredoxin]-disulfide + H2O = sarcosine + [thioredoxin]-dithiol + phosphate + H(+). The catalysed reaction is acetyl phosphate + trimethylamine + [thioredoxin]-disulfide + H2O = glycine betaine + [thioredoxin]-dithiol + phosphate + H(+). In the first step of glycine, betaine and sarcosine reductases, the substrate is bound to component PB via a Schiff base intermediate. Then the PB-activated substrate is nucleophilically attacked by the selenol anion of component PA to transform it to a carboxymethylated selenoether and the respective amine. By action of component PC, acetyl phosphate is formed, leaving component PA in its oxidized state. Finally component PA becomes reduced by the thioredoxin system to start a new catalytic cycle of reductive deamination. The sequence is that of Glycine/sarcosine/betaine reductase complex component A1 (grdA1) from Peptoclostridium acidaminophilum (Eubacterium acidaminophilum).